A 396-amino-acid chain; its full sequence is Mannonate dehydratase (396 aa).

It belongs to the mannonate dehydratase family. Fe(2+) is required as a cofactor. It depends on Mn(2+) as a cofactor.

The enzyme catalyses D-mannonate = 2-dehydro-3-deoxy-D-gluconate + H2O. It participates in carbohydrate metabolism; pentose and glucuronate interconversion. Functionally, catalyzes the dehydration of D-mannonate. The chain is Mannonate dehydratase from Enterobacter sp. (strain 638).